The primary structure comprises 87 residues: HssA/B-like protein 28 (87 aa).

It belongs to the hssA/B family.

This Dictyostelium discoideum (Social amoeba) protein is HssA/B-like protein 28 (hssl28).